A 462-amino-acid chain; its full sequence is Jasmonoyl--L-amino acid synthetase GH3.3 (462 aa).

ATP is bound at residue serine 103. Serine 106 serves as a coordination point for jasmonate. ATP is bound by residues threonine 126, asparagine 172, and 337–342 (GASEGW). An an L-alpha-amino acid-binding site is contributed by 170 to 174 (TTNVY). Jasmonate-binding positions include 334–337 (AEYG) and serine 339.

Belongs to the IAA-amido conjugating enzyme family. Expressed in green shoots and flowers.

It catalyses the reaction a jasmonate + an L-alpha-amino acid + ATP = a jasmonyl-L-amino acid + AMP + diphosphate + H(+). Its function is as follows. Catalyzes the synthesis of jasmonate-amino acid conjugates by adenylation. Catalyzes the conjugation of jasmonate (JA) to Ile when expressed in a heterologous system (E.coli). Catalyzes in vitro the conjugation of jasmonate (JA) to Ile, Phe, Leu, Met, Val and Trp. May catalyze the synthesis of indole-3-acetic acid (IAA)-amino acid conjugates, providing a mechanism for the plant to cope with the presence of excess auxin. The polypeptide is Jasmonoyl--L-amino acid synthetase GH3.3 (Oryza sativa subsp. japonica (Rice)).